The primary structure comprises 365 residues: 3-isopropylmalate dehydrogenase (365 aa).

Position 80 to 91 (80 to 91 (GPKWGTGAVRPE)) interacts with NAD(+). Positions 98, 108, 137, and 226 each coordinate substrate. 3 residues coordinate Mg(2+): aspartate 226, aspartate 251, and aspartate 255. 290 to 301 (GSAPDLPKGKVN) lines the NAD(+) pocket.

It belongs to the isocitrate and isopropylmalate dehydrogenases family. In terms of assembly, homodimer. Requires Mg(2+) as cofactor. Mn(2+) is required as a cofactor.

The protein resides in the cytoplasm. The catalysed reaction is (2R,3S)-3-isopropylmalate + NAD(+) = 4-methyl-2-oxopentanoate + CO2 + NADH. It participates in amino-acid biosynthesis; L-leucine biosynthesis; L-leucine from 3-methyl-2-oxobutanoate: step 3/4. In terms of biological role, catalyzes the oxidation of 3-carboxy-2-hydroxy-4-methylpentanoate (3-isopropylmalate) to 3-carboxy-4-methyl-2-oxopentanoate. The product decarboxylates to 4-methyl-2 oxopentanoate. The chain is 3-isopropylmalate dehydrogenase (LEU2) from Candida glabrata (strain ATCC 2001 / BCRC 20586 / JCM 3761 / NBRC 0622 / NRRL Y-65 / CBS 138) (Yeast).